The sequence spans 254 residues: Thiazole synthase (254 aa).

K96 functions as the Schiff-base intermediate with DXP in the catalytic mechanism. 1-deoxy-D-xylulose 5-phosphate-binding positions include G157, 183-184, and 205-206; these read AG and NT.

It belongs to the ThiG family. As to quaternary structure, homotetramer. Forms heterodimers with either ThiH or ThiS.

It localises to the cytoplasm. It catalyses the reaction [ThiS sulfur-carrier protein]-C-terminal-Gly-aminoethanethioate + 2-iminoacetate + 1-deoxy-D-xylulose 5-phosphate = [ThiS sulfur-carrier protein]-C-terminal Gly-Gly + 2-[(2R,5Z)-2-carboxy-4-methylthiazol-5(2H)-ylidene]ethyl phosphate + 2 H2O + H(+). It functions in the pathway cofactor biosynthesis; thiamine diphosphate biosynthesis. In terms of biological role, catalyzes the rearrangement of 1-deoxy-D-xylulose 5-phosphate (DXP) to produce the thiazole phosphate moiety of thiamine. Sulfur is provided by the thiocarboxylate moiety of the carrier protein ThiS. In vitro, sulfur can be provided by H(2)S. The polypeptide is Thiazole synthase (Clostridium perfringens (strain 13 / Type A)).